A 968-amino-acid chain; its full sequence is MPFALGQRWISDTESELGLGTVVQVEGRMVTVLFPATGENRMFSRAEAPLTRVTYNPGDTVESHEGWSLTIEDLTEKDGLVIYHGIHSETGEQVTLRETLLNHNIRFNKPQDRLFAGQIDRLDRFGVRYQCQMLRHKLATSDLLGLQGPRVGLIPHQMWIAHEVGRRYAPRVLLADEVGLGKTIEAGLIIHQQLLTGRAERVLVIVPDTLRHQWLVEMLRRFNLRFSVFDEDRCVEAYADHDNPFYTEQLVICSLELLRKKKRLDQALDADWDLLVVDEAHHLEWTEEAPSRAYQVVEALSEVVPGVLLLTATPDQLGHESHFARLRLLDPDRFYDYDAFLAEENSYKDVAIAAEALAGNAKLPDAAINSLTELLSEKDIAPSIRLIQADGIDSDVQQAARSELLQELLDRHGTGRVLYRNSRASVKGFPKRFFNPHPQTMPEQYLTAARVSSMMGGHKTLEAKAAQALSPEKLYQEFEDNSASWWKFDPRVDWLIAFLKSHRSKKVLIIASQAETALSLEEALRTREGIQATVFHEGMSIIERDKAGAYFAQEEGGAQALICSEIGSEGRNFQFASHLVLFDLPLNPDLLEQRIGRLDRIGQKNDIQIHLPYLEDTAQERLMQWYHQGLNAFELTCPSGHVLYAEFAEDLLNVLVGDDADELTNLLNHTQSRYKELKHAMEQGRDKLLEINSHGGDRAKAIVERLAQNDENTQLIGSVIRLWDIIGVDQEDKGENSIILRPSEHMMFPTYPGLPEDGVTVTFDRDTALSRDDIALITQEHPLVQTGLDLITGSETGTTSVAVLKNKALPAGTLFLELIYMADASAPKSSQLYRYLPPTPIRILLDKNGNDLSAKVDYASFDKQLSAVNRHIGGKLVTASQPILHPLFAKGEEYAQAAVDELVIQAREKMTTQLTGELDRLESLKAVNPNIREEELEYLRNQMQELNTYLDASQLQLDAIRMVLVSHV.

The Helicase ATP-binding domain occupies 163-332; the sequence is EVGRRYAPRV…FARLRLLDPD (170 aa). 176–183 contacts ATP; the sequence is DEVGLGKT. The short motif at 278-281 is the DEAH box element; the sequence is DEAH. The 153-residue stretch at 491-643 folds into the Helicase C-terminal domain; it reads RVDWLIAFLK…ELTCPSGHVL (153 aa).

The protein belongs to the SNF2/RAD54 helicase family. RapA subfamily. As to quaternary structure, interacts with the RNAP. Has a higher affinity for the core RNAP than for the holoenzyme. Its ATPase activity is stimulated by binding to RNAP.

Transcription regulator that activates transcription by stimulating RNA polymerase (RNAP) recycling in case of stress conditions such as supercoiled DNA or high salt concentrations. Probably acts by releasing the RNAP, when it is trapped or immobilized on tightly supercoiled DNA. Does not activate transcription on linear DNA. Probably not involved in DNA repair. This is RNA polymerase-associated protein RapA from Shewanella sp. (strain W3-18-1).